The primary structure comprises 321 residues: Mas-related G-protein coupled receptor member D (321 aa).

Residues 1–33 (MNQTLNSSGTVESALNYSRGSTVHTAYLVLSSL) are Extracellular-facing. N-linked (GlcNAc...) asparagine glycans are attached at residues N2, N6, and N16. The chain crosses the membrane as a helical span at residues 34–54 (AMFTCLCGMAGNSMVIWLLGF). At 55 to 59 (RMHRN) the chain is on the cytoplasmic side. The chain crosses the membrane as a helical span at residues 60–80 (PFCIYILNLAAADLLFLFSMA). Residues 81-112 (STLSLETQPLVNTTDKVHELMKRLMYFAYTVG) are Extracellular-facing. N92 is a glycosylation site (N-linked (GlcNAc...) asparagine). The helical transmembrane segment at 113-133 (LSLLTAISTQRCLSVLFPIWF) threads the bilayer. Residues 134-142 (KCHRPRHLS) lie on the Cytoplasmic side of the membrane. The chain crosses the membrane as a helical span at residues 143–163 (AWVCGLLWTLCLLMNGLTSSF). Topologically, residues 164-184 (CSKFLKFNEDRCFRVDMVQAA) are extracellular. Residues 185–205 (LIMGVLTPVMTLSSLTLFVWV) form a helical membrane-spanning segment. Over 206–218 (RRSSQQWRRQPTR) the chain is Cytoplasmic. The helical transmembrane segment at 219-239 (LFVVVLASVLVFLICSLPLSI) threads the bilayer. At 240–257 (YWFVLYWLSLPPEMQVLC) the chain is on the extracellular side. A helical transmembrane segment spans residues 258-280 (FSLSRLSSSVSSSANPVIYFLVG). Topologically, residues 281 to 321 (SRRSHRLPTRSLGTVLQQALREEPELEGGETPTVGTNEMGA) are cytoplasmic. The tract at residues 302–321 (EEPELEGGETPTVGTNEMGA) is disordered.

Belongs to the G-protein coupled receptor 1 family. Mas subfamily.

The protein resides in the cell membrane. May regulate nociceptor function and/or development, including the sensation or modulation of pain. Functions as a specific membrane receptor for beta-alanine. Beta-alanine at micromolar doses specifically evoked Ca(2+) influx in cells expressing the receptor. Beta-alanine decreases forskolin-stimulated cAMP production in cells expressing the receptor, suggesting that the receptor couples with G-protein G(q) and G(i). In Homo sapiens (Human), this protein is Mas-related G-protein coupled receptor member D (MRGPRD).